The following is a 435-amino-acid chain: Gamma-glutamyl phosphate reductase (435 aa).

This sequence belongs to the gamma-glutamyl phosphate reductase family.

Its subcellular location is the cytoplasm. It carries out the reaction L-glutamate 5-semialdehyde + phosphate + NADP(+) = L-glutamyl 5-phosphate + NADPH + H(+). The protein operates within amino-acid biosynthesis; L-proline biosynthesis; L-glutamate 5-semialdehyde from L-glutamate: step 2/2. Functionally, catalyzes the NADPH-dependent reduction of L-glutamate 5-phosphate into L-glutamate 5-semialdehyde and phosphate. The product spontaneously undergoes cyclization to form 1-pyrroline-5-carboxylate. This Aquifex aeolicus (strain VF5) protein is Gamma-glutamyl phosphate reductase.